A 532-amino-acid chain; its full sequence is uncharacterized protein (532 aa).

Disordered stretches follow at residues 26–84 (KALR…TDSE), 97–129 (VFDESVSSDTDSEESHEEKRILPLGTPGQQVGR), and 157–470 (SKAA…HTCQ). A compositionally biased stretch (low complexity) spans 30-40 (GNNNGSSTSGG). A compositionally biased stretch (polar residues) spans 67 to 80 (DIISQARRQVSLSR). Basic and acidic residues predominate over residues 157 to 181 (SKAAGEESKRHAHFESIQEEEKISE). The span at 198–213 (IQSGSESSDSDSIIFD) shows a compositional bias: low complexity. The segment covering 237–249 (VEKKIEKPAVKEQ) has biased composition (basic and acidic residues). Low complexity-rich tracts occupy residues 259 to 290 (PTPTESSFESSSDSSSTSESSTSSESSSSASE), 298 to 315 (ESQVSSSKTSTSKASSSK), and 326 to 335 (SSSSSASTIS). Residues 347 to 356 (KTKKPDKKRA) show a composition bias toward basic residues. Composition is skewed to basic and acidic residues over residues 357–368 (KPDDIRQNKKPE), 389–403 (STVRETNRTLEESLK), 410–419 (KSSEKMEKPR), and 437–448 (RDAEREQDIERR). The span at 449 to 461 (REKRARRFRSRRR) shows a compositional bias: basic residues.

This is an uncharacterized protein from Caenorhabditis elegans.